Here is a 92-residue protein sequence, read N- to C-terminus: Small ribosomal subunit protein uS19c (92 aa).

It belongs to the universal ribosomal protein uS19 family.

The protein localises to the plastid. The protein resides in the chloroplast. Protein S19 forms a complex with S13 that binds strongly to the 16S ribosomal RNA. The chain is Small ribosomal subunit protein uS19c from Oedogonium cardiacum (Filamentous green alga).